The primary structure comprises 416 residues: Probable glucan 1,3-beta-glucosidase A (416 aa).

Positions 1–22 (MIFKFSQKALVALYLVVGLAEA) are cleaved as a signal peptide. Glu211 functions as the Proton donor in the catalytic mechanism. Cystine bridges form between Cys291–Cys415 and Cys316–Cys342. Glu308 serves as the catalytic Nucleophile. The N-linked (GlcNAc...) asparagine glycan is linked to Asn344.

Belongs to the glycosyl hydrolase 5 (cellulase A) family. In terms of assembly, monomer. Mn(2+) serves as cofactor.

The protein localises to the secreted. The catalysed reaction is Successive hydrolysis of beta-D-glucose units from the non-reducing ends of (1-&gt;3)-beta-D-glucans, releasing alpha-glucose.. In terms of biological role, beta-glucanases participate in the metabolism of beta-glucan, the main structural component of the cell wall. It could also function biosynthetically as a transglycosylase. The polypeptide is Probable glucan 1,3-beta-glucosidase A (exgA) (Aspergillus fumigatus (strain CBS 144.89 / FGSC A1163 / CEA10) (Neosartorya fumigata)).